Reading from the N-terminus, the 367-residue chain is tRNA-specific 2-thiouridylase MnmA (367 aa).

ATP contacts are provided by residues 6–13 and Met32; that span reads AMSGGVDS. Cys101 serves as the catalytic Nucleophile. A disulfide bond links Cys101 and Cys193. ATP is bound at residue Gly125. The interaction with tRNA stretch occupies residues 143-145; it reads KDQ. Cys193 (cysteine persulfide intermediate) is an active-site residue.

The protein belongs to the MnmA/TRMU family.

It is found in the cytoplasm. It catalyses the reaction S-sulfanyl-L-cysteinyl-[protein] + uridine(34) in tRNA + AH2 + ATP = 2-thiouridine(34) in tRNA + L-cysteinyl-[protein] + A + AMP + diphosphate + H(+). Catalyzes the 2-thiolation of uridine at the wobble position (U34) of tRNA, leading to the formation of s(2)U34. This is tRNA-specific 2-thiouridylase MnmA from Mycobacterium tuberculosis (strain CDC 1551 / Oshkosh).